The chain runs to 303 residues: Coenzyme PQQ synthesis protein B (303 aa).

Belongs to the PqqB family.

Its pathway is cofactor biosynthesis; pyrroloquinoline quinone biosynthesis. Functionally, may be involved in the transport of PQQ or its precursor to the periplasm. The sequence is that of Coenzyme PQQ synthesis protein B from Pseudomonas syringae pv. tomato (strain ATCC BAA-871 / DC3000).